Reading from the N-terminus, the 308-residue chain is Protoheme IX farnesyltransferase (308 aa).

A run of 9 helical transmembrane segments spans residues 20-40 (VLAY…VTAI), 53-73 (PLLI…ANTF), 102-122 (NALV…WWTT), 124-144 (LLSG…YTLL), 149-169 (TSQN…IGWS), 170-190 (AITD…FFWT), 227-249 (LIYT…WLYM), 254-276 (VAGA…GEPV), and 288-308 (YLAV…PTLF).

Belongs to the UbiA prenyltransferase family. Protoheme IX farnesyltransferase subfamily.

Its subcellular location is the cell membrane. The enzyme catalyses heme b + (2E,6E)-farnesyl diphosphate + H2O = Fe(II)-heme o + diphosphate. The protein operates within porphyrin-containing compound metabolism; heme O biosynthesis; heme O from protoheme: step 1/1. Functionally, converts heme B (protoheme IX) to heme O by substitution of the vinyl group on carbon 2 of heme B porphyrin ring with a hydroxyethyl farnesyl side group. The protein is Protoheme IX farnesyltransferase of Mycobacterium leprae (strain TN).